We begin with the raw amino-acid sequence, 101 residues long: NAD(P)H-quinone oxidoreductase subunit 4L, chloroplastic (101 aa).

Transmembrane regions (helical) follow at residues 2–22 (MLEH…YGLI), 32–52 (MCLE…SDFF), and 61–81 (IFSI…SAIV).

This sequence belongs to the complex I subunit 4L family. As to quaternary structure, NDH is composed of at least 16 different subunits, 5 of which are encoded in the nucleus.

Its subcellular location is the plastid. It localises to the chloroplast thylakoid membrane. It catalyses the reaction a plastoquinone + NADH + (n+1) H(+)(in) = a plastoquinol + NAD(+) + n H(+)(out). The catalysed reaction is a plastoquinone + NADPH + (n+1) H(+)(in) = a plastoquinol + NADP(+) + n H(+)(out). NDH shuttles electrons from NAD(P)H:plastoquinone, via FMN and iron-sulfur (Fe-S) centers, to quinones in the photosynthetic chain and possibly in a chloroplast respiratory chain. The immediate electron acceptor for the enzyme in this species is believed to be plastoquinone. Couples the redox reaction to proton translocation, and thus conserves the redox energy in a proton gradient. The protein is NAD(P)H-quinone oxidoreductase subunit 4L, chloroplastic of Citrus sinensis (Sweet orange).